The primary structure comprises 334 residues: L-lactate dehydrogenase (334 aa).

A disordered region spans residues 1–22 (MASTKGKLIHEMVPSKERDPPH). Over residues 8–22 (LIHEMVPSKERDPPH) the composition is skewed to basic and acidic residues. Residues 31 to 59 (GQVGMAAAISVLLRDLADELALVDVVEDR) and Arg-101 contribute to the NAD(+) site. Residues Arg-108, Asn-140, and Arg-171 each coordinate substrate. Residue Asn-140 participates in NAD(+) binding. Residue His-195 is the Proton acceptor of the active site. Thr-250 is a substrate binding site.

The protein belongs to the LDH/MDH superfamily. LDH family. In terms of assembly, homotetramer.

It localises to the cytoplasm. The enzyme catalyses (S)-lactate + NAD(+) = pyruvate + NADH + H(+). Its pathway is fermentation; pyruvate fermentation to lactate; (S)-lactate from pyruvate: step 1/1. The chain is L-lactate dehydrogenase from Petromyzon marinus (Sea lamprey).